Here is an 879-residue protein sequence, read N- to C-terminus: JmjC domain-containing histone demethylation protein 1 (879 aa).

Disordered regions lie at residues 1 to 45, 117 to 212, and 407 to 449; these read MSEQ…EEGK, STSP…PKRK, and KDVK…EGLK. The segment at 23-116 adopts a PHD-type zinc-finger fold; that stretch reads PEPCPLCRET…KWYCAPCLAR (94 aa). Basic and acidic residues-rich tracts occupy residues 183 to 192 and 407 to 433; these read IDMKSEREQQ and KDVKEKGRGNDSRESSEIRKEGSHLTE. Positions 416–598 constitute a JmjC domain; sequence NDSRESSEIR…TQLRLRQIEI (183 aa). Thr472 is a substrate binding site. Residues His475 and Asp477 each coordinate Fe cation. Lys492 is a substrate binding site. His566 provides a ligand contact to Fe cation. The segment at 763-879 is disordered; that stretch reads HPPAWSENRQ…KVEEDMDIDH (117 aa). Residues 769–782 show a composition bias toward polar residues; it reads ENRQSPQIETTTVQ. Over residues 786–818 the composition is skewed to low complexity; that stretch reads PSTSSSDAISGSGPGASPGASANGGANENEQAE. Over residues 848–864 the composition is skewed to basic and acidic residues; sequence FVEKKTVWGPKLDKEKI.

The protein belongs to the JHDM1 histone demethylase family. Requires Fe(2+) as cofactor.

The protein resides in the nucleus. The catalysed reaction is N(6),N(6)-dimethyl-L-lysyl(36)-[histone H3] + 2 2-oxoglutarate + 2 O2 = L-lysyl(36)-[histone H3] + 2 formaldehyde + 2 succinate + 2 CO2. Functionally, histone demethylase that specifically demethylates 'Lys-36' of histone H3, thereby playing a central role in histone code. The sequence is that of JmjC domain-containing histone demethylation protein 1 (JHD1) from Cryptococcus neoformans var. neoformans serotype D (strain B-3501A) (Filobasidiella neoformans).